We begin with the raw amino-acid sequence, 723 residues long: Choline transporter-like protein 4 (723 aa).

The Cytoplasmic segment spans residues 1 to 36 (MGKKKQEEEQNSSEYGAPAQYDPTFNGPIHKRSCTD). The helical transmembrane segment at 37–57 (IICCVLFMLVITGYMVVGILA) threads the bilayer. Topologically, residues 58-245 (WLYGDPRHVL…RIFEDFAKTW (188 aa)) are extracellular. Asn71, Asn202, Asn211, and Asn219 each carry an N-linked (GlcNAc...) asparagine glycan. A helical transmembrane segment spans residues 246-266 (QWIVAGLVIAMVVSVLFLLLL). Residues 267-269 (RFT) are Cytoplasmic-facing. The chain crosses the membrane as a helical span at residues 270–290 (APVLIWILIFGVLAVGAFGIW). Over 291–325 (YCYNDYMSLASSNLTFSNVGFTTNVQVYLQVRDTW) the chain is Extracellular. Asn303 is a glycosylation site (N-linked (GlcNAc...) asparagine). Residues 326-346 (LAFLIILCIVEAVLILALIFL) form a helical membrane-spanning segment. Residues 347 to 374 (RTRILIAIALIQETSKALGHMMSTLLYP) lie on the Cytoplasmic side of the membrane. A helical transmembrane segment spans residues 375–395 (VVTFVLLLVCVSYWGITALYL). Residues 396-464 (ATSGAPIYKV…RNLFNLQIYN (69 aa)) are Extracellular-facing. N-linked (GlcNAc...) asparagine glycosylation is found at Asn409, Asn421, and Asn430. The chain crosses the membrane as a helical span at residues 465–485 (VVAFLWCVNFVIALGHCTLAG). Topologically, residues 486 to 516 (AFASYYWAFSKPADIPTFPLTQSFMRALRYH) are cytoplasmic. A helical transmembrane segment spans residues 517–537 (VGSLAFGALILTLVQIVRIIL). Over 538–578 (EYLDHKFKAAQNPCARFLMCCLKCCFWCLEKFIKFINRNAY) the chain is Extracellular. A helical membrane pass occupies residues 579–599 (IMIAIYGKNFCVSAKNAFFLL). Over 600–615 (MRNIVRVVVLDKVTDL) the chain is Cytoplasmic. A helical membrane pass occupies residues 616–636 (LLFFGKLLVVGGIGVLAFFFF). The Extracellular portion of the chain corresponds to 637 to 655 (SGRIQLPGNTFQTAALNYY). The helical transmembrane segment at 656–676 (WMPIITVVFGAYLIAHGFFSV) threads the bilayer. Topologically, residues 677–723 (YNMGVDTLFLCFLEDLERNDGSAEKPYFMSKNLMKILNKKNKQPKTG) are cytoplasmic.

The protein belongs to the CTL (choline transporter-like) family.

The protein localises to the membrane. It is found in the apical cell membrane. It catalyses the reaction choline(out) + n H(+)(in) = choline(in) + n H(+)(out). It carries out the reaction thiamine diphosphate(out) = thiamine diphosphate(in). Functionally, choline transporter that seems to play a role in the choline-acetylcholine system and is required to the efferent innervation of hair cells in the olivocochlear bundle for the maintenance of physiological function of outer hair cells and the protection of hair cells from acoustic injury. Also described as a thiamine pyrophosphate transporter. This chain is Choline transporter-like protein 4 (slc44a4), found in Danio rerio (Zebrafish).